The chain runs to 646 residues: MSQQIYPVPAHAKEHSHLTPADYARMYAESVEQPEVFWAEQAKSLDWVKTPTKIKNTSFDAHHVSIKWFEDGELNVAYNCIDRHLAKRGHVTAFIWEGDDPHSHDIITYHRLHDEVAKIANGLRKLGVGKGDRVAIYMPMIPQAVYAMLACARIGAVHTVIFGGFSPNAIADRVNNCQAKVLITADEGLRAGKHIPLKDNVDTALAEHDCPSMEQVIVFKHTGSHVSWGKDDVWWHDLTDGCSTDCPPEVMNAEDPLFILYTSGSTGQPKGVVHTTGGYLLWASITHKYVFDYKPGDIYWCAADVGWVTGHSYIVYGPLANGATSVMFEGVPTYPDVRRIGQIVDKHKVNILYTAPTAIRALMAHGDFPTEGISGESLRLLGSVGEPINPEAWHWYYTTVGQSRCPIVDTWWQTETGAAMLTPLPSVTAMKPGAASHPFFGVQPALVDGQGNELSGATEGNLIITDSWPGQARTVYGDHERFVQTYFTTYPGTYCTGDGARRDEDDYFWITGRVDDVLNVSGHRLGTAEIESALVSHNAVAEAAVVGYPHDLKGQGIYVYLMPNEGVEITDELTKEVSNWVRKELSPIATPDLIQWSSGLPKTRSGKIMRRILRKIAANEYEQLGDTSTLADPSVVDTLIEQRLNR.

Residues 190-193 and threonine 309 each bind CoA; that span reads RAGK. ATP-binding positions include 385 to 387, 409 to 414, aspartate 498, and arginine 513; these read GEP and DTWWQT. Position 521 (serine 521) interacts with CoA. Arginine 524 contributes to the ATP binding site. Mg(2+) is bound by residues valine 535, histidine 537, and valine 540. CoA is bound at residue arginine 582. The residue at position 607 (lysine 607) is an N6-acetyllysine.

The protein belongs to the ATP-dependent AMP-binding enzyme family. The cofactor is Mg(2+). Post-translationally, acetylated. Deacetylation by the SIR2-homolog deacetylase activates the enzyme.

It carries out the reaction acetate + ATP + CoA = acetyl-CoA + AMP + diphosphate. Functionally, catalyzes the conversion of acetate into acetyl-CoA (AcCoA), an essential intermediate at the junction of anabolic and catabolic pathways. AcsA undergoes a two-step reaction. In the first half reaction, AcsA combines acetate with ATP to form acetyl-adenylate (AcAMP) intermediate. In the second half reaction, it can then transfer the acetyl group from AcAMP to the sulfhydryl group of CoA, forming the product AcCoA. In Pseudoalteromonas atlantica (strain T6c / ATCC BAA-1087), this protein is Acetyl-coenzyme A synthetase.